A 394-amino-acid chain; its full sequence is Phosphoglycerate kinase (394 aa).

Residues 21–23 (DFN), R37, 60–63 (HLGR), R119, and R152 contribute to the substrate site. Residues K202, E324, and 350–353 (GGDS) each bind ATP.

This sequence belongs to the phosphoglycerate kinase family. In terms of assembly, monomer.

It is found in the cytoplasm. The enzyme catalyses (2R)-3-phosphoglycerate + ATP = (2R)-3-phospho-glyceroyl phosphate + ADP. Its pathway is carbohydrate degradation; glycolysis; pyruvate from D-glyceraldehyde 3-phosphate: step 2/5. This chain is Phosphoglycerate kinase, found in Herpetosiphon aurantiacus (strain ATCC 23779 / DSM 785 / 114-95).